The chain runs to 221 residues: uncharacterized protein (221 aa).

The N-terminal stretch at 1-18 (MKRFLLLIILFGISFSFV) is a signal peptide.

This is an uncharacterized protein from Aquifex aeolicus (strain VF5).